We begin with the raw amino-acid sequence, 167 residues long: Large ribosomal subunit protein uL10 (167 aa).

It belongs to the universal ribosomal protein uL10 family. As to quaternary structure, part of the ribosomal stalk of the 50S ribosomal subunit. The N-terminus interacts with L11 and the large rRNA to form the base of the stalk. The C-terminus forms an elongated spine to which L12 dimers bind in a sequential fashion forming a multimeric L10(L12)X complex.

Forms part of the ribosomal stalk, playing a central role in the interaction of the ribosome with GTP-bound translation factors. The chain is Large ribosomal subunit protein uL10 from Tolumonas auensis (strain DSM 9187 / NBRC 110442 / TA 4).